Here is a 652-residue protein sequence, read N- to C-terminus: MTIAILPARLANQIAAGEVVERPASVIKELIENSLDAGATSIHIDVDKGGIKKIKITDNGHGIVKEELTLALSRHATSKIKSLNDLEAIGSLGFRGEALASISSVARLTLTSKPQSQATAWQAVAEGRDMSVNIKPAAHPDGTSIEVLDLFFNTPARRKFLRTEKTEFNHIDEVVRRIALAHFEVSFSLTHNGNTVRQYRMASTHAQCIKRVAMVCGPKFIEHAVEVDCPHDNMTLSGWLAKPSFSRSQNDLCYSYVNGRMMRDKLINHAIRQAYADLLPPDTYPAFVLFLQLDHREVDVNVHPSKHEVRFHQSRYVHDFIYSVCHKALTSALAGEELFTTADSDLALVPEQSYSSLGANDRQGSHSSNTPTLNYPSADYIRPLQHVNDASNSQSTSSYSGYGQQHKTNAISKIAASNYQALMTPDKGSSAQVQNTSGSDQASAQKHETTTLQNSTDQSAFLSVHQPGYALYKTENGVRVLSLFKLAKSTYGKLVEQSWQNKTEQSDCPVECLVSQPLLLPVILSLSEQQLSFVLAEQEILSNAGIVFIQQHKNKIQIRQFPALLREQDVSNALIIIIEELIEKRSFTEGEALCETNLHQSIGLAMVLAEYDETQADILLRLTKKLFHEQLSQQLLLNSIPLDLTSHIKTLF.

Disordered regions lie at residues 357–377 and 425–457; these read LGAN…NYPS and PDKG…NSTD. Over residues 365–375 the composition is skewed to polar residues; it reads SHSSNTPTLNY.

This sequence belongs to the DNA mismatch repair MutL/HexB family.

In terms of biological role, this protein is involved in the repair of mismatches in DNA. It is required for dam-dependent methyl-directed DNA mismatch repair. May act as a 'molecular matchmaker', a protein that promotes the formation of a stable complex between two or more DNA-binding proteins in an ATP-dependent manner without itself being part of a final effector complex. The protein is DNA mismatch repair protein MutL of Colwellia psychrerythraea (strain 34H / ATCC BAA-681) (Vibrio psychroerythus).